The primary structure comprises 147 residues: Large ribosomal subunit protein uL15 (147 aa).

Residues 1 to 28 (MIRRRKKVRKLRGSHTHGWGCKKKHRGG) show a composition bias toward basic residues. A disordered region spans residues 1–43 (MIRRRKKVRKLRGSHTHGWGCKKKHRGGGSKGGRGMAGTGKRN). The segment covering 29-38 (GSKGGRGMAG) has biased composition (gly residues).

This sequence belongs to the universal ribosomal protein uL15 family. In terms of assembly, part of the 50S ribosomal subunit.

Its function is as follows. Binds to the 23S rRNA. This chain is Large ribosomal subunit protein uL15, found in Pyrococcus abyssi (strain GE5 / Orsay).